The sequence spans 36 residues: Potassium channel toxin alpha-KTx 1.9 (36 aa).

The protein belongs to the short scorpion toxin superfamily. Potassium channel inhibitor family. Alpha-KTx 01 subfamily. In terms of tissue distribution, expressed by the venom gland.

The protein resides in the secreted. Potent selective inhibitor of Kv1/KCNA voltage-gated potassium channels. This is Potassium channel toxin alpha-KTx 1.9 from Centruroides limbatus (Bark scorpion).